A 290-amino-acid chain; its full sequence is Outer dense fiber protein 4 (290 aa).

A Phosphoserine modification is found at Ser-28. The next 4 membrane-spanning stretches (helical) occupy residues 44 to 64, 125 to 145, 164 to 184, and 201 to 221; these read AQVVASEFSLVAFLLLLVMVF, PVFGVAKISFTLAIGLGFVLT, LIGIILSFCEVTLIFLTLLLF, and IGWSYFIGWLVLILYFTCGIL. Residues 247–290 are disordered; it reads GPESLVSPSQTPSSQENSQESPKDDQKPSSPDKVVSPPQPDTTG. Polar residues predominate over residues 252-266; the sequence is VSPSQTPSSQENSQE.

Expressed in testis.

The protein localises to the membrane. Functionally, component of the outer dense fibers (ODF) of spermatozoa which could be involved in sperm tail structure, sperm movement and general organization of cellular cytoskeleton. This Mus musculus (Mouse) protein is Outer dense fiber protein 4 (Odf4).